Reading from the N-terminus, the 602-residue chain is Lysine--tRNA ligase, chloroplastic/mitochondrial (602 aa).

Over residues 50-62 (SSSSSSATTAETS) the composition is skewed to low complexity. The segment at 50-83 (SSSSSSATTAETSKPSGRNRRSASSSNSTSDREA) is disordered. The segment at residues 136–214 (VSIAGRVVAR…SICVNSFSIL (79 aa)) is a DNA-binding region (OB). The substrate site is built by Gly285 and Glu309. ATP contacts are provided by residues 331-333 (RNE) and 339-340 (HN). Substrate contacts are provided by Glu347 and Tyr349. Positions 492 and 499 each coordinate Ca(2+). Residue 499–500 (EM) coordinates ATP. Substrate is bound by residues Asn502 and Glu506. Positions 524–543 (HNAKRAEAVRESPEPNAKKD) are enriched in basic and acidic residues. The tract at residues 524-550 (HNAKRAEAVRESPEPNAKKDDDDDESY) is disordered. 575–578 (GIDR) contacts ATP.

The protein belongs to the class-II aminoacyl-tRNA synthetase family. It depends on Ca(2+) as a cofactor.

The protein localises to the plastid. Its subcellular location is the chloroplast. The protein resides in the mitochondrion. It carries out the reaction tRNA(Lys) + L-lysine + ATP = L-lysyl-tRNA(Lys) + AMP + diphosphate. Functionally, catalyzes the specific attachment of an amino acid to its cognate tRNA in a 2 step reaction: the amino acid (AA) is first activated by ATP to form AA-AMP and then transferred to the acceptor end of the tRNA. The sequence is that of Lysine--tRNA ligase, chloroplastic/mitochondrial from Arabidopsis thaliana (Mouse-ear cress).